The following is a 100-amino-acid chain: Mitochondrial import inner membrane translocase subunit Tim10 B (100 aa).

The short motif at Cys25–Cys49 is the Twin CX3C motif element. Disulfide bonds link Cys25-Cys49 and Cys29-Cys45.

This sequence belongs to the small Tim family. Component of the TIM22 complex, which core is composed of TIMM22, associated with TIMM10 (TIMM10A and/or TIMM10B), TIMM9, AGK and TIMM29.

The protein resides in the mitochondrion inner membrane. Component of the TIM22 complex, a complex that mediates the import and insertion of multi-pass transmembrane proteins into the mitochondrial inner membrane. The TIM22 complex forms a twin-pore translocase that uses the membrane potential as the external driving force. In the TIM22 complex, it may act as a docking point for the soluble 70 kDa complex that guides the target proteins in transit through the aqueous mitochondrial intermembrane space. In Rattus norvegicus (Rat), this protein is Mitochondrial import inner membrane translocase subunit Tim10 B (Timm10b).